We begin with the raw amino-acid sequence, 433 residues long: Signal recognition particle 54 kDa protein (433 aa).

GTP is bound by residues 106–113 (GVEGSGKT), 186–190 (DTAGR), and 244–247 (TKMD).

It belongs to the GTP-binding SRP family. SRP54 subfamily. In terms of assembly, part of the signal recognition particle protein translocation system, which is composed of SRP and FtsY. Archaeal SRP consists of a 7S RNA molecule of 300 nucleotides and two protein subunits: SRP54 and SRP19.

It is found in the cytoplasm. The catalysed reaction is GTP + H2O = GDP + phosphate + H(+). In terms of biological role, involved in targeting and insertion of nascent membrane proteins into the cytoplasmic membrane. Binds to the hydrophobic signal sequence of the ribosome-nascent chain (RNC) as it emerges from the ribosomes. The SRP-RNC complex is then targeted to the cytoplasmic membrane where it interacts with the SRP receptor FtsY. This Pyrobaculum neutrophilum (strain DSM 2338 / JCM 9278 / NBRC 100436 / V24Sta) (Thermoproteus neutrophilus) protein is Signal recognition particle 54 kDa protein.